Reading from the N-terminus, the 193-residue chain is Transcriptional repressor NrdR (193 aa).

Residues 3-34 (CPYCGGLDTQVKDSRPSEDASAIRRRRICPDC) fold into a zinc finger. One can recognise an ATP-cone domain in the interval 49-139 (LTVVKRSGRK…VYKNFREAKD (91 aa)). The segment at 150 to 193 (DQQDGAVPQAEADRPIGAGPPSEAAQPAAGEGGDAPMRRARSRA) is disordered.

It belongs to the NrdR family. The cofactor is Zn(2+).

Its function is as follows. Negatively regulates transcription of bacterial ribonucleotide reductase nrd genes and operons by binding to NrdR-boxes. The protein is Transcriptional repressor NrdR of Methylobacterium nodulans (strain LMG 21967 / CNCM I-2342 / ORS 2060).